Consider the following 179-residue polypeptide: ATP synthase subunit delta (179 aa).

This sequence belongs to the ATPase delta chain family. F-type ATPases have 2 components, F(1) - the catalytic core - and F(0) - the membrane proton channel. F(1) has five subunits: alpha(3), beta(3), gamma(1), delta(1), epsilon(1). F(0) has three main subunits: a(1), b(2) and c(10-14). The alpha and beta chains form an alternating ring which encloses part of the gamma chain. F(1) is attached to F(0) by a central stalk formed by the gamma and epsilon chains, while a peripheral stalk is formed by the delta and b chains.

It localises to the cell membrane. Functionally, f(1)F(0) ATP synthase produces ATP from ADP in the presence of a proton or sodium gradient. F-type ATPases consist of two structural domains, F(1) containing the extramembraneous catalytic core and F(0) containing the membrane proton channel, linked together by a central stalk and a peripheral stalk. During catalysis, ATP synthesis in the catalytic domain of F(1) is coupled via a rotary mechanism of the central stalk subunits to proton translocation. In terms of biological role, this protein is part of the stalk that links CF(0) to CF(1). It either transmits conformational changes from CF(0) to CF(1) or is implicated in proton conduction. The sequence is that of ATP synthase subunit delta from Ureaplasma urealyticum serovar 10 (strain ATCC 33699 / Western).